A 379-amino-acid polypeptide reads, in one-letter code: Putative acetyl-CoA C-acetyltransferase VraB (379 aa).

Catalysis depends on Cys86, which acts as the Acyl-thioester intermediate. His338 serves as the catalytic Proton acceptor.

The protein belongs to the thiolase-like superfamily. Thiolase family.

This is Putative acetyl-CoA C-acetyltransferase VraB (vraB) from Staphylococcus aureus (strain MRSA252).